The following is a 165-amino-acid chain: SsrA-binding protein (165 aa).

The span at 135–158 (QAHDKRQDMARRDAQREVTRELGR) shows a compositional bias: basic and acidic residues. The disordered stretch occupies residues 135–165 (QAHDKRQDMARRDAQREVTRELGRRVKGMTN).

It belongs to the SmpB family.

It is found in the cytoplasm. Functionally, required for rescue of stalled ribosomes mediated by trans-translation. Binds to transfer-messenger RNA (tmRNA), required for stable association of tmRNA with ribosomes. tmRNA and SmpB together mimic tRNA shape, replacing the anticodon stem-loop with SmpB. tmRNA is encoded by the ssrA gene; the 2 termini fold to resemble tRNA(Ala) and it encodes a 'tag peptide', a short internal open reading frame. During trans-translation Ala-aminoacylated tmRNA acts like a tRNA, entering the A-site of stalled ribosomes, displacing the stalled mRNA. The ribosome then switches to translate the ORF on the tmRNA; the nascent peptide is terminated with the 'tag peptide' encoded by the tmRNA and targeted for degradation. The ribosome is freed to recommence translation, which seems to be the essential function of trans-translation. In Mycolicibacterium gilvum (strain PYR-GCK) (Mycobacterium gilvum (strain PYR-GCK)), this protein is SsrA-binding protein.